We begin with the raw amino-acid sequence, 404 residues long: Probable tRNA sulfurtransferase (404 aa).

The THUMP domain maps to 60-165; the sequence is HEVAESLKEI…DEAAYISYEN (106 aa). Residues 183 to 184, 208 to 209, Arg265, Gly287, and Gln296 contribute to the ATP site; these read ML and HF.

Belongs to the ThiI family.

The protein localises to the cytoplasm. The catalysed reaction is [ThiI sulfur-carrier protein]-S-sulfanyl-L-cysteine + a uridine in tRNA + 2 reduced [2Fe-2S]-[ferredoxin] + ATP + H(+) = [ThiI sulfur-carrier protein]-L-cysteine + a 4-thiouridine in tRNA + 2 oxidized [2Fe-2S]-[ferredoxin] + AMP + diphosphate. The enzyme catalyses [ThiS sulfur-carrier protein]-C-terminal Gly-Gly-AMP + S-sulfanyl-L-cysteinyl-[cysteine desulfurase] + AH2 = [ThiS sulfur-carrier protein]-C-terminal-Gly-aminoethanethioate + L-cysteinyl-[cysteine desulfurase] + A + AMP + 2 H(+). Its pathway is cofactor biosynthesis; thiamine diphosphate biosynthesis. Functionally, catalyzes the ATP-dependent transfer of a sulfur to tRNA to produce 4-thiouridine in position 8 of tRNAs, which functions as a near-UV photosensor. Also catalyzes the transfer of sulfur to the sulfur carrier protein ThiS, forming ThiS-thiocarboxylate. This is a step in the synthesis of thiazole, in the thiamine biosynthesis pathway. The sulfur is donated as persulfide by IscS. The polypeptide is Probable tRNA sulfurtransferase (Streptococcus agalactiae serotype III (strain NEM316)).